Here is a 168-residue protein sequence, read N- to C-terminus: uncharacterized protein (168 aa).

CBS domains follow at residues 20-77 (IMKK…NEDL) and 117-168 (MTRK…EALI).

This is an uncharacterized protein from Methanocaldococcus jannaschii (strain ATCC 43067 / DSM 2661 / JAL-1 / JCM 10045 / NBRC 100440) (Methanococcus jannaschii).